The following is a 357-amino-acid chain: Cinnamyl alcohol dehydrogenase 7 (357 aa).

Zn(2+) is bound at residue C46. An NADP(+)-binding site is contributed by T48. Positions 68, 69, 99, 102, 105, 113, and 162 each coordinate Zn(2+). NADP(+) contacts are provided by residues T166, 187–192 (GLGGLG), 210–215 (STSERK), T250, G274, and 297–299 (SMV).

It belongs to the zinc-containing alcohol dehydrogenase family. As to quaternary structure, homodimer. Zn(2+) is required as a cofactor. Expressed in the differentiation and elongation zones of primary and lateral roots. Expressed in the hypocotyl, cotyledon and leaf veins, hydathodes and trichomes. In stems, expressed in the vascular cambium region. Expressed in the style, anthers, stamen filaments, vascular tissues of sepals and stigmatic regions in flowers, and abscission, style and stigmatic regions of siliques and seed testa.

It carries out the reaction (E)-cinnamyl alcohol + NADP(+) = (E)-cinnamaldehyde + NADPH + H(+). It participates in aromatic compound metabolism; phenylpropanoid biosynthesis. Its function is as follows. Involved in lignin biosynthesis. Catalyzes the final step specific for the production of lignin monomers. Catalyzes the NADPH-dependent reduction of coniferaldehyde, 5-hydroxyconiferaldehyde, sinapaldehyde, 4-coumaraldehyde and caffeyl aldehyde to their respective alcohols. This chain is Cinnamyl alcohol dehydrogenase 7 (CAD7), found in Arabidopsis thaliana (Mouse-ear cress).